We begin with the raw amino-acid sequence, 485 residues long: Glutamyl-tRNA(Gln) amidotransferase subunit A (485 aa).

Active-site charge relay system residues include K79 and S154. The active-site Acyl-ester intermediate is S178.

This sequence belongs to the amidase family. GatA subfamily. As to quaternary structure, heterotrimer of A, B and C subunits.

It carries out the reaction L-glutamyl-tRNA(Gln) + L-glutamine + ATP + H2O = L-glutaminyl-tRNA(Gln) + L-glutamate + ADP + phosphate + H(+). In terms of biological role, allows the formation of correctly charged Gln-tRNA(Gln) through the transamidation of misacylated Glu-tRNA(Gln) in organisms which lack glutaminyl-tRNA synthetase. The reaction takes place in the presence of glutamine and ATP through an activated gamma-phospho-Glu-tRNA(Gln). This chain is Glutamyl-tRNA(Gln) amidotransferase subunit A, found in Clostridium novyi (strain NT).